The chain runs to 352 residues: 4-hydroxy-3-methylbut-2-en-1-yl diphosphate synthase (flavodoxin) (352 aa).

[4Fe-4S] cluster contacts are provided by cysteine 262, cysteine 265, cysteine 297, and glutamate 304.

Belongs to the IspG family. [4Fe-4S] cluster serves as cofactor.

The enzyme catalyses (2E)-4-hydroxy-3-methylbut-2-enyl diphosphate + oxidized [flavodoxin] + H2O + 2 H(+) = 2-C-methyl-D-erythritol 2,4-cyclic diphosphate + reduced [flavodoxin]. It participates in isoprenoid biosynthesis; isopentenyl diphosphate biosynthesis via DXP pathway; isopentenyl diphosphate from 1-deoxy-D-xylulose 5-phosphate: step 5/6. Converts 2C-methyl-D-erythritol 2,4-cyclodiphosphate (ME-2,4cPP) into 1-hydroxy-2-methyl-2-(E)-butenyl 4-diphosphate. In Nitratiruptor sp. (strain SB155-2), this protein is 4-hydroxy-3-methylbut-2-en-1-yl diphosphate synthase (flavodoxin).